The primary structure comprises 455 residues: Chromosomal replication initiator protein DnaA (455 aa).

The interval 1 to 74 (MFNFEKFWQH…IQSAYGYAGV (74 aa)) is domain I, interacts with DnaA modulators. The segment at 74–117 (VELLPVFQISEDSDTPERIVTPEPQHNLQTTPTRAPQREFAKDL) is domain II. The interval 118-334 (KLNEKYTFDN…GALVKVQAYA (217 aa)) is domain III, AAA+ region. 4 residues coordinate ATP: G162, G164, K165, and T166. Positions 335 to 455 (TIEKADIDIN…VFDLKQMLEH (121 aa)) are domain IV, binds dsDNA.

It belongs to the DnaA family. In terms of assembly, oligomerizes as a right-handed, spiral filament on DNA at oriC.

The protein resides in the cytoplasm. Plays an essential role in the initiation and regulation of chromosomal replication. ATP-DnaA binds to the origin of replication (oriC) to initiate formation of the DNA replication initiation complex once per cell cycle. Binds the DnaA box (a 9 base pair repeat at the origin) and separates the double-stranded (ds)DNA. Forms a right-handed helical filament on oriC DNA; dsDNA binds to the exterior of the filament while single-stranded (ss)DNA is stabiized in the filament's interior. The ATP-DnaA-oriC complex binds and stabilizes one strand of the AT-rich DNA unwinding element (DUE), permitting loading of DNA polymerase. After initiation quickly degrades to an ADP-DnaA complex that is not apt for DNA replication. Binds acidic phospholipids. The protein is Chromosomal replication initiator protein DnaA of Lactobacillus acidophilus (strain ATCC 700396 / NCK56 / N2 / NCFM).